We begin with the raw amino-acid sequence, 371 residues long: MPFLPEPLFQHGQPDRTAILLVNLGTPDGTSPREVGRYLRQFLSDPRVVEIPRAAWWFILNVLILPLRSRASAHKYETVWLREANMTGSPLLVYSERQAHALQQLLDAQGHDVVVACAMRYGNPSIPSVMQTLRKQGVERILVLPMYPQYSGTTTATAFDEVFRVMGQMRNQPELRLVKHFHDHPAYINALHQQVGAYWAQHGAPDFARGDKLLLSFHGVPRRTLELGDPYHCACLKTGRLLGEALGLQPGQYLVTFQSRFGRAEWLQPYTAPTLEELGRVGTGRVDVFCPGFPADCLETLEEIAMEGQSTFRVAGGKDFHYIPCLNDSEPWIAGLADIAQAHLQGWPLALPHPHVLEASRTRAQSKGAAA.

Fe cation contacts are provided by H218 and E299.

The protein belongs to the ferrochelatase family.

The protein resides in the cytoplasm. It catalyses the reaction heme b + 2 H(+) = protoporphyrin IX + Fe(2+). The protein operates within porphyrin-containing compound metabolism; protoheme biosynthesis; protoheme from protoporphyrin-IX: step 1/1. Functionally, catalyzes the ferrous insertion into protoporphyrin IX. In Ralstonia nicotianae (strain ATCC BAA-1114 / GMI1000) (Ralstonia solanacearum), this protein is Ferrochelatase.